The following is an 86-amino-acid chain: RNA-binding protein Hfq (86 aa).

The Sm domain occupies 10–71 (DLFLNNARKE…VSTIQPGKYI (62 aa)).

It belongs to the Hfq family. Homohexamer.

RNA chaperone that binds small regulatory RNA (sRNAs) and mRNAs to facilitate mRNA translational regulation in response to envelope stress, environmental stress and changes in metabolite concentrations. Also binds with high specificity to tRNAs. The chain is RNA-binding protein Hfq from Clostridioides difficile (strain 630) (Peptoclostridium difficile).